A 314-amino-acid chain; its full sequence is Secreted frizzled-related protein 1 (314 aa).

The signal sequence occupies residues 1–31; sequence MGVGRSEGGRRGAALGVLLALGVALLAVGSA. One can recognise an FZ domain in the interval 53-169; the sequence is TKPHQCVAIP…FPQDYVCIAM (117 aa). 5 disulfide bridges follow: C58/C121, C68/C114, C105/C140, C129/C166, and C133/C157. A glycan (N-linked (GlcNAc...) asparagine) is linked at N173. 3 cysteine pairs are disulfide-bonded: C186-C256, C189-C258, and C203-C306. Residues 186–306 enclose the NTR domain; it reads CPPCDNEMKS…FMKKVKAPDC (121 aa).

The protein belongs to the secreted frizzled-related protein (sFRP) family.

The protein localises to the secreted. Soluble frizzled-related proteins (sFRPS) function as modulators of Wnt signaling through direct interaction with Wnts. They have a role in regulating cell growth and differentiation in specific cell types. This chain is Secreted frizzled-related protein 1 (SFRP1), found in Gallus gallus (Chicken).